A 197-amino-acid chain; its full sequence is Protein FAM219B (197 aa).

Disordered stretches follow at residues 1 to 77 (MATE…HRDH) and 117 to 142 (DENL…YSSA). Ser14, Ser125, and Ser127 each carry phosphoserine.

This sequence belongs to the FAM219 family.

The polypeptide is Protein FAM219B (Fam219b) (Mus musculus (Mouse)).